Reading from the N-terminus, the 194-residue chain is Protein GrpE (194 aa).

Residues 1–53 (MVENEKTSVEETEEKAETEDEMLTEDPSNEDSDEANEEGNELSEEEKRIAELE) form a disordered region. Residues 10–44 (EETEEKAETEDEMLTEDPSNEDSDEANEEGNELSE) show a composition bias toward acidic residues.

It belongs to the GrpE family. As to quaternary structure, homodimer.

It is found in the cytoplasm. In terms of biological role, participates actively in the response to hyperosmotic and heat shock by preventing the aggregation of stress-denatured proteins, in association with DnaK and GrpE. It is the nucleotide exchange factor for DnaK and may function as a thermosensor. Unfolded proteins bind initially to DnaJ; upon interaction with the DnaJ-bound protein, DnaK hydrolyzes its bound ATP, resulting in the formation of a stable complex. GrpE releases ADP from DnaK; ATP binding to DnaK triggers the release of the substrate protein, thus completing the reaction cycle. Several rounds of ATP-dependent interactions between DnaJ, DnaK and GrpE are required for fully efficient folding. The sequence is that of Protein GrpE from Halalkalibacterium halodurans (strain ATCC BAA-125 / DSM 18197 / FERM 7344 / JCM 9153 / C-125) (Bacillus halodurans).